We begin with the raw amino-acid sequence, 70 residues long: uncharacterized protein (70 aa).

This is an uncharacterized protein from Enterobacteria phage T4 (Bacteriophage T4).